We begin with the raw amino-acid sequence, 106 residues long: Thiosulfate sulfurtransferase GlpE (106 aa).

The 89-residue stretch at 16 to 104 folds into the Rhodanese domain; sequence REQGAVLVDV…WRTTYPQETV (89 aa). C64 serves as the catalytic Cysteine persulfide intermediate.

This sequence belongs to the GlpE family.

Its subcellular location is the cytoplasm. The enzyme catalyses thiosulfate + hydrogen cyanide = thiocyanate + sulfite + 2 H(+). The catalysed reaction is thiosulfate + [thioredoxin]-dithiol = [thioredoxin]-disulfide + hydrogen sulfide + sulfite + 2 H(+). Functionally, transferase that catalyzes the transfer of sulfur from thiosulfate to thiophilic acceptors such as cyanide or dithiols. May function in a CysM-independent thiosulfate assimilation pathway by catalyzing the conversion of thiosulfate to sulfite, which can then be used for L-cysteine biosynthesis. The sequence is that of Thiosulfate sulfurtransferase GlpE from Pseudomonas syringae pv. syringae (strain B728a).